The sequence spans 227 residues: Large ribosomal subunit protein uL10c (227 aa).

A chloroplast-targeting transit peptide spans 1–47 (MEATFFTLPSSTSHSYPFSLKSHFNNSLTLPTHPHFKPKSKNLTIRS).

This sequence belongs to the universal ribosomal protein uL10 family. In terms of assembly, part of the 50S ribosomal subunit.

The protein resides in the plastid. It localises to the chloroplast. Functionally, this protein binds directly to 23S ribosomal RNA. This is Large ribosomal subunit protein uL10c (RPL10) from Nicotiana tabacum (Common tobacco).